The following is a 1010-amino-acid chain: Regulator of telomere elongation helicase 1 homolog (1010 aa).

The 327-residue stretch at 7–333 (NGITVNFPFE…KEMLLQLEKT (327 aa)) folds into the Helicase ATP-binding domain. 42 to 49 (SPTGTGKT) contributes to the ATP binding site. Cys157, Cys175, Cys184, and Cys220 together coordinate [4Fe-4S] cluster. The DEAH box motif lies at 263–266 (DEAH). The interval 912 to 931 (TSDDEDPGRTGDDPTRQAPE) is disordered. Basic and acidic residues predominate over residues 918 to 931 (PGRTGDDPTRQAPE).

It belongs to the helicase family. RAD3/XPD subfamily.

The protein resides in the nucleus. It carries out the reaction ATP + H2O = ADP + phosphate + H(+). Functionally, a probable ATP-dependent DNA helicase implicated in DNA repair and the maintenance of genomic stability. Acts as an anti-recombinase to counteract toxic recombination and limit crossover during meiosis. Regulates meiotic recombination and crossover homeostasis by physically dissociating strand invasion events and thereby promotes noncrossover repair by meiotic synthesis dependent strand annealing (SDSA) as well as disassembly of D loop recombination intermediates. This is Regulator of telomere elongation helicase 1 homolog from Aedes aegypti (Yellowfever mosquito).